Consider the following 410-residue polypeptide: Serine hydroxymethyltransferase (410 aa).

Residues Leu119 and 123-125 contribute to the (6S)-5,6,7,8-tetrahydrofolate site; that span reads GHL. Position 228 is an N6-(pyridoxal phosphate)lysine (Lys228). 351–353 is a (6S)-5,6,7,8-tetrahydrofolate binding site; it reads SPF.

This sequence belongs to the SHMT family. Homodimer. It depends on pyridoxal 5'-phosphate as a cofactor.

The protein localises to the cytoplasm. It carries out the reaction (6R)-5,10-methylene-5,6,7,8-tetrahydrofolate + glycine + H2O = (6S)-5,6,7,8-tetrahydrofolate + L-serine. It functions in the pathway one-carbon metabolism; tetrahydrofolate interconversion. Its pathway is amino-acid biosynthesis; glycine biosynthesis; glycine from L-serine: step 1/1. Functionally, catalyzes the reversible interconversion of serine and glycine with tetrahydrofolate (THF) serving as the one-carbon carrier. This reaction serves as the major source of one-carbon groups required for the biosynthesis of purines, thymidylate, methionine, and other important biomolecules. Also exhibits THF-independent aldolase activity toward beta-hydroxyamino acids, producing glycine and aldehydes, via a retro-aldol mechanism. The chain is Serine hydroxymethyltransferase from Clostridium perfringens (strain 13 / Type A).